The primary structure comprises 330 residues: Polyprenal reductase (330 aa).

Residues 1 to 16 (MAGWAGFELSALNPLR) lie on the Cytoplasmic side of the membrane. A helical membrane pass occupies residues 17-37 (TLWLALAAAFLFALLLQLAPA). Over 38–80 (RLLPSCALFQDLLRYGKTKQSGSRRPAVCRAFDVPKRYFSHFY) the chain is Lumenal. The chain crosses the membrane as a helical span at residues 81–101 (VISVVWNGSLLWLLSQSLFLG). Residues 102–132 (APFPNWLSALLRTLGATQFQALEMESKASRM) are Cytoplasmic-facing. Residues 133 to 153 (PAAELALSAFLVLVFLWVHSL) traverse the membrane as a helical segment. At 154–169 (RRLFECFYVSVFSNAA) the chain is on the lumenal side. A helical membrane pass occupies residues 170–190 (IHVVQYCFGLVYYVLVGLTVL). At 191–206 (SQVPMDDKNVYVLGKN) the chain is on the cytoplasmic side. Residues 207–227 (LLIQARWFHILGMVMFFWSSA) traverse the membrane as a helical segment. The Lumenal segment spans residues 228-277 (HQYKCHVILSNLRRNKKGVVIHCQHRIPFGDWFEYVSSANYLAELMIYIS). Residues 278–298 (MAVTFGLHNLTWWLVVTYVFS) form a helical membrane-spanning segment. The Cytoplasmic segment spans residues 299 to 330 (SQALSAFFNHKFYRSTFVSYPKHRKAFLPFLF).

This sequence belongs to the steroid 5-alpha reductase family. Polyprenal reductase subfamily.

It localises to the endoplasmic reticulum membrane. It carries out the reaction a di-trans,poly-cis-dolichal + NADP(+) = a di-trans,poly-cis-polyprenal + NADPH + H(+). The enzyme catalyses a 3-oxo-5alpha-steroid + NADP(+) = a 3-oxo-Delta(4)-steroid + NADPH + H(+). It catalyses the reaction androst-4-ene-3,17-dione + NADPH + H(+) = 5alpha-androstan-3,17-dione + NADP(+). The catalysed reaction is 17beta-hydroxy-5alpha-androstan-3-one + NADP(+) = testosterone + NADPH + H(+). It participates in protein modification; protein glycosylation. In terms of biological role, plays a key role in early steps of protein N-linked glycosylation by being involved in the conversion of polyprenol into dolichol. Acts as a polyprenal reductase that mediates the reduction of polyprenal into dolichal in a NADP-dependent mechanism. Dolichols are required for the synthesis of dolichol-linked monosaccharides and the oligosaccharide precursor used for N-glycosylation. Also able to convert testosterone (T) into 5-alpha-dihydrotestosterone (DHT). This chain is Polyprenal reductase, found in Mus musculus (Mouse).